The primary structure comprises 67 residues: Large ribosomal subunit protein uL29 (67 aa).

This sequence belongs to the universal ribosomal protein uL29 family.

This chain is Large ribosomal subunit protein uL29, found in Exiguobacterium sp. (strain ATCC BAA-1283 / AT1b).